Here is a 238-residue protein sequence, read N- to C-terminus: Ribosomal RNA small subunit methyltransferase G (238 aa).

S-adenosyl-L-methionine-binding positions include Gly77, Phe82, 128 to 129, and Arg147; that span reads AE.

Belongs to the methyltransferase superfamily. RNA methyltransferase RsmG family.

The protein localises to the cytoplasm. In terms of biological role, specifically methylates the N7 position of guanine in position 535 of 16S rRNA. The sequence is that of Ribosomal RNA small subunit methyltransferase G from Listeria welshimeri serovar 6b (strain ATCC 35897 / DSM 20650 / CCUG 15529 / CIP 8149 / NCTC 11857 / SLCC 5334 / V8).